A 310-amino-acid polypeptide reads, in one-letter code: Probable plastid-lipid-associated protein 2, chloroplastic (310 aa).

Residues 1–59 (MATVQLSTQFSCQTRVSISPNSKSISKPPFLVPVTSIIHRPMISTGGIAVSPRRVFKVR) constitute a chloroplast transit peptide. Position 61 is a phosphothreonine (Thr-61). Positions 65-94 (EIGSALLAAEEAIEDVEETERLKRSLVDSL) form a coiled coil.

Belongs to the PAP/fibrillin family.

The protein localises to the plastid. It localises to the chloroplast. It is found in the plastoglobule. Its function is as follows. Probably involved in light/cold stress-related jasmonate (JA) biosynthesis. This is Probable plastid-lipid-associated protein 2, chloroplastic (PAP2) from Arabidopsis thaliana (Mouse-ear cress).